Consider the following 246-residue polypeptide: Small ribosomal subunit protein uS2c (246 aa).

This sequence belongs to the universal ribosomal protein uS2 family.

It localises to the plastid. Its subcellular location is the chloroplast. The chain is Small ribosomal subunit protein uS2c (rps2) from Pelargonium hortorum (Common geranium).